We begin with the raw amino-acid sequence, 75 residues long: Large ribosomal subunit protein bL31 (75 aa).

Cys-16, Cys-18, Cys-37, and Cys-40 together coordinate Zn(2+).

Belongs to the bacterial ribosomal protein bL31 family. Type A subfamily. Part of the 50S ribosomal subunit. Zn(2+) serves as cofactor.

Its function is as follows. Binds the 23S rRNA. The chain is Large ribosomal subunit protein bL31 from Pseudomonas syringae pv. tomato (strain ATCC BAA-871 / DC3000).